The primary structure comprises 557 residues: Aerobic glycerol-3-phosphate dehydrogenase (557 aa).

FAD is bound at residue 21–49 (DLVIIGGGITGAGIALDASERGMKVALVE).

It belongs to the FAD-dependent glycerol-3-phosphate dehydrogenase family. Requires FAD as cofactor.

The protein localises to the cytoplasm. The enzyme catalyses a quinone + sn-glycerol 3-phosphate = dihydroxyacetone phosphate + a quinol. Its pathway is polyol metabolism; glycerol degradation via glycerol kinase pathway; glycerone phosphate from sn-glycerol 3-phosphate (aerobic route): step 1/1. In Staphylococcus aureus (strain MRSA252), this protein is Aerobic glycerol-3-phosphate dehydrogenase (glpD).